A 248-amino-acid polypeptide reads, in one-letter code: Adenosylcobinamide-GDP ribazoletransferase (248 aa).

8 consecutive transmembrane segments (helical) span residues 3 to 23 (ELKA…PINI), 35 to 55 (SYFP…YLLL), 63 to 83 (IVMT…HIDG), 109 to 129 (LGTN…LFLS), 135 to 155 (LLFS…VFSI), 180 to 199 (FVIA…PLKD), 200 to 219 (LALL…KYIS), and 228 to 248 (DTLG…FSIL).

The protein belongs to the CobS family. The cofactor is Mg(2+).

The protein resides in the cell membrane. It catalyses the reaction alpha-ribazole + adenosylcob(III)inamide-GDP = adenosylcob(III)alamin + GMP + H(+). It carries out the reaction alpha-ribazole 5'-phosphate + adenosylcob(III)inamide-GDP = adenosylcob(III)alamin 5'-phosphate + GMP + H(+). Its pathway is cofactor biosynthesis; adenosylcobalamin biosynthesis; adenosylcobalamin from cob(II)yrinate a,c-diamide: step 7/7. Its function is as follows. Joins adenosylcobinamide-GDP and alpha-ribazole to generate adenosylcobalamin (Ado-cobalamin). Also synthesizes adenosylcobalamin 5'-phosphate from adenosylcobinamide-GDP and alpha-ribazole 5'-phosphate. In Caldanaerobacter subterraneus subsp. tengcongensis (strain DSM 15242 / JCM 11007 / NBRC 100824 / MB4) (Thermoanaerobacter tengcongensis), this protein is Adenosylcobinamide-GDP ribazoletransferase.